The following is a 267-amino-acid chain: Cytokinesis defective protein 7 (267 aa).

The disordered stretch occupies residues 244-267 (RNQADQSILPPSGDQQHHRSELHA). Residues 258–267 (QQHHRSELHA) show a composition bias toward basic and acidic residues.

The protein is Cytokinesis defective protein 7 of Caenorhabditis elegans.